The sequence spans 158 residues: 6,7-dimethyl-8-ribityllumazine synthase (158 aa).

5-amino-6-(D-ribitylamino)uracil-binding positions include F23, 57–59, and 81–83; these read AFE and TVI. Position 86 to 87 (86 to 87) interacts with (2S)-2-hydroxy-3-oxobutyl phosphate; that stretch reads GT. Catalysis depends on H89, which acts as the Proton donor. F114 serves as a coordination point for 5-amino-6-(D-ribitylamino)uracil. Residue R128 participates in (2S)-2-hydroxy-3-oxobutyl phosphate binding.

It belongs to the DMRL synthase family.

It catalyses the reaction (2S)-2-hydroxy-3-oxobutyl phosphate + 5-amino-6-(D-ribitylamino)uracil = 6,7-dimethyl-8-(1-D-ribityl)lumazine + phosphate + 2 H2O + H(+). The protein operates within cofactor biosynthesis; riboflavin biosynthesis; riboflavin from 2-hydroxy-3-oxobutyl phosphate and 5-amino-6-(D-ribitylamino)uracil: step 1/2. Functionally, catalyzes the formation of 6,7-dimethyl-8-ribityllumazine by condensation of 5-amino-6-(D-ribitylamino)uracil with 3,4-dihydroxy-2-butanone 4-phosphate. This is the penultimate step in the biosynthesis of riboflavin. This Desulforudis audaxviator (strain MP104C) protein is 6,7-dimethyl-8-ribityllumazine synthase.